We begin with the raw amino-acid sequence, 789 residues long: Ent-kaurene synthase TSP4, chloroplastic (789 aa).

Mg(2+) contacts are provided by Asp540 and Asp544. A DDXXD motif motif is present at residues 540-544 (DDFFD). A helical membrane pass occupies residues 638–656 (AYVSFALGPIVLPALYLVG). Asn684, Arg687, and Glu692 together coordinate Mg(2+).

The protein belongs to the terpene synthase family. Mg(2+) serves as cofactor. In terms of tissue distribution, expressed in leaves and fruits, including trichomes.

It is found in the plastid. Its subcellular location is the chloroplast membrane. It carries out the reaction ent-copalyl diphosphate = ent-kaur-16-ene + diphosphate. Its pathway is plant hormone biosynthesis; gibberellin biosynthesis. Functionally, involved in the biosynthesis of labdane-type diterpenoid including cleroda-dienols, and peregrinol lactones and furan derivatives, dopaminergic diterpenoids that can bind to dopamine receptors in the human pituitary gland, have probably ability to lower prolactin levels, and are used to treat menstrual cycle disorders (e.g. premenstrual syndrome and mastodynia). Terpene synthase that produces ent-kaurene from ent-copalyl diphosphate. The protein is Ent-kaurene synthase TSP4, chloroplastic of Vitex agnus-castus (Chaste tree).